The chain runs to 335 residues: GTPase Obg (335 aa).

Residues 1–158 (MFVDQITLEL…RQVELELKLI (158 aa)) form the Obg domain. Residues 126–145 (NTFFKTSVNRAPTKATPGKP) are disordered. Residues 159–334 (ADIGLVGFPN…LYRFFTQRLA (176 aa)) enclose the OBG-type G domain. GTP-binding positions include 165–172 (GFPNAGKS), 190–194 (FTTLA), 215–218 (DIPG), 285–288 (NKID), and 315–317 (SGL). Residues Ser-172 and Thr-192 each coordinate Mg(2+).

The protein belongs to the TRAFAC class OBG-HflX-like GTPase superfamily. OBG GTPase family. As to quaternary structure, monomer. The cofactor is Mg(2+).

Its subcellular location is the cytoplasm. In terms of biological role, an essential GTPase which binds GTP, GDP and possibly (p)ppGpp with moderate affinity, with high nucleotide exchange rates and a fairly low GTP hydrolysis rate. Plays a role in control of the cell cycle, stress response, ribosome biogenesis and in those bacteria that undergo differentiation, in morphogenesis control. The protein is GTPase Obg of Chlamydia pneumoniae (Chlamydophila pneumoniae).